A 378-amino-acid chain; its full sequence is Mannitol-1-phosphate 5-dehydrogenase (378 aa).

4–15 is an NAD(+) binding site; sequence SVHFGAGNIGRG.

The protein belongs to the mannitol dehydrogenase family.

It catalyses the reaction D-mannitol 1-phosphate + NAD(+) = beta-D-fructose 6-phosphate + NADH + H(+). The protein is Mannitol-1-phosphate 5-dehydrogenase of Streptococcus pneumoniae (strain Hungary19A-6).